Here is a 65-residue protein sequence, read N- to C-terminus: Seminal plasma acrosin inhibitor A1 (65 aa).

One can recognise a Kazal-like domain in the interval 1-59; that stretch reads TRKQPNCNVYRSHLFFCTRQMDPICGTNGKSYANPCIFCSEKGLRNQKFDFGHWGHCRE. 3 disulfides stabilise this stretch: Cys7/Cys39, Cys17/Cys36, and Cys25/Cys57. The O-linked (GalNAc...) serine glycan is linked to Ser12. O-linked (GalNAc...) serine glycosylation is present at Ser62.

Post-translationally, the identity of the O-linked saccharides are not reported in Ref.1. The O-linked polysaccharides on Ser-12 and Ser-62 are probably the mucin type linked to GalNAc. As to expression, seminal plasma.

It localises to the secreted. Functionally, inhibits acrosin. The sequence is that of Seminal plasma acrosin inhibitor A1 from Sus scrofa (Pig).